Here is a 391-residue protein sequence, read N- to C-terminus: Small ribosomal subunit protein mS29 (391 aa).

The transit peptide at 1–17 (MLTGITRLFSRVQKLDP) directs the protein to the mitochondrion. The interval 30–59 (NSQVPAERPRTVSRTSDSDPAKHGEQHEGQ) is disordered. The span at 45-59 (SDSDPAKHGEQHEGQ) shows a compositional bias: basic and acidic residues. N6-acetyllysine is present on residues Lys168 and Lys200.

The protein belongs to the mitochondrion-specific ribosomal protein mS29 family. In terms of assembly, component of the mitochondrial ribosome small subunit (28S) which comprises a 12S rRNA and about 30 distinct proteins. Interacts with DELE1. Interacts with NOA1.

It is found in the mitochondrion. The enzyme catalyses GTP + H2O = GDP + phosphate + H(+). As a component of the mitochondrial small ribosomal subunit, it plays a role in the translation of mitochondrial mRNAs. Involved in mediating interferon-gamma-induced cell death. Displays GTPase activity in vitro. The polypeptide is Small ribosomal subunit protein mS29 (Mus musculus (Mouse)).